A 150-amino-acid polypeptide reads, in one-letter code: UPF0208 membrane protein VC_1099 (150 aa).

The next 2 membrane-spanning stretches (helical) occupy residues 42-62 (FAIK…MVFA) and 70-90 (AIVV…WLGH).

Belongs to the UPF0208 family.

Its subcellular location is the cell inner membrane. The chain is UPF0208 membrane protein VC_1099 from Vibrio cholerae serotype O1 (strain ATCC 39315 / El Tor Inaba N16961).